Consider the following 129-residue polypeptide: Transcriptional activator protein (129 aa).

The Nuclear localization signal signature appears at 13–28 (KAQHKIAKRRAVRRRR). Residues 33 to 50 (CGCSIFLHINCADNGFTH) fold into a zinc finger. The segment at 73–109 (IFQDTTRRGPVVHQNQDLPHPSPVQPQPTESIGSPQS) is disordered. Ser109 is subject to Phosphoserine; by host. The tract at residues 115-129 (SLDDFDESFWADIFK) is transactivation.

This sequence belongs to the geminiviridae transcriptional activator protein family. In terms of assembly, monomer. Homodimer. Homooligomer. Self-interaction correlates with nuclear localization and efficient activation of transcription. Monomers suppress local silencing by interacting with and inactivating host adenosine kinase 2 (ADK2) in the cytoplasm. Interacts with and inhibits host SNF1 kinase. Binds to ssDNA. In terms of processing, phosphorylated at Ser-109 by A.thaliana KIN10.

The protein localises to the host nucleus. The protein resides in the host cytoplasm. Functionally, strong activator of the late viral genes promoters. Enhances the expression of the capsid protein and nuclear shuttle protein. Acts as a suppressor of RNA-mediated gene silencing, also known as post-transcriptional gene silencing (PTGS), a mechanism of plant viral defense that limits the accumulation of viral RNAs. Suppresses the host RNA silencing by inhibiting adenosine kinase 2 (ADK2), a kinase involved in a general methylation pathway. Also suppresses the host basal defense by interacting with and inhibiting SNF1 kinase, a key regulator of cell metabolism implicated in innate antiviral defense. Determines pathogenicity. This Cabbage leaf curl virus (isolate Jamaica) (CaLCuV) protein is Transcriptional activator protein.